The chain runs to 374 residues: Glutamate 5-kinase (374 aa).

K16 is an ATP binding site. S56, D143, and N155 together coordinate substrate. ATP contacts are provided by residues 175-176 (TD) and 217-223 (SGGMLTK). The PUA domain maps to 282–360 (RGALILDDGA…SNIGAILGYK (79 aa)).

The protein belongs to the glutamate 5-kinase family.

The protein resides in the cytoplasm. It carries out the reaction L-glutamate + ATP = L-glutamyl 5-phosphate + ADP. It participates in amino-acid biosynthesis; L-proline biosynthesis; L-glutamate 5-semialdehyde from L-glutamate: step 1/2. In terms of biological role, catalyzes the transfer of a phosphate group to glutamate to form L-glutamate 5-phosphate. This chain is Glutamate 5-kinase, found in Marinomonas sp. (strain MWYL1).